A 382-amino-acid polypeptide reads, in one-letter code: Transcription factor MYB104 (382 aa).

2 HTH myb-type domains span residues 13–69 and 70–120; these read KKTF…KPSL and KKGP…MRLK. 2 DNA-binding regions (H-T-H motif) span residues 41–65 and 93–116; these read WTHV…MNHL and WSQM…NARR. The disordered stretch occupies residues 326-364; that stretch reads IPKTDTSSESQLFQSSLRSHTDATPDIANTTGYVGSNER. Composition is skewed to polar residues over residues 329–343 and 352–364; these read TDTS…SSLR and IANT…SNER.

Its subcellular location is the nucleus. This is Transcription factor MYB104 (MYB104) from Arabidopsis thaliana (Mouse-ear cress).